A 128-amino-acid polypeptide reads, in one-letter code: Probable 4-amino-4-deoxy-L-arabinose-phosphoundecaprenol flippase subunit ArnF (128 aa).

The Cytoplasmic portion of the chain corresponds to 1-2 (MG). Residues 3–23 (LIWGLFSVIIASVAQLSLGFA) form a helical membrane-spanning segment. The Periplasmic segment spans residues 24–35 (ASHLPPMTHLWD). A helical membrane pass occupies residues 36 to 56 (FIAALLAFGLDARILLLGLLG). Topologically, residues 57–75 (YLLSVFCWYKTLHKLALSK) are cytoplasmic. A helical membrane pass occupies residues 76-96 (AYALLSMSYVLVWIASMVLPG). Residues 97-100 (REGT) are Periplasmic-facing. Residues 101 to 121 (FSLKALLGVACIMSGLMLIFL) form a helical membrane-spanning segment. Residues 122 to 128 (PTTKQRY) are Cytoplasmic-facing.

The protein belongs to the ArnF family. In terms of assembly, heterodimer of ArnE and ArnF.

It is found in the cell inner membrane. It functions in the pathway bacterial outer membrane biogenesis; lipopolysaccharide biosynthesis. Translocates 4-amino-4-deoxy-L-arabinose-phosphoundecaprenol (alpha-L-Ara4N-phosphoundecaprenol) from the cytoplasmic to the periplasmic side of the inner membrane. In Shigella flexneri serotype 5b (strain 8401), this protein is Probable 4-amino-4-deoxy-L-arabinose-phosphoundecaprenol flippase subunit ArnF.